Reading from the N-terminus, the 506-residue chain is Cysteine--tRNA ligase (506 aa).

Cys-34 lines the Zn(2+) pocket. The short motif at 36–46 (PTVYDFAHIGN) is the 'HIGH' region element. The Zn(2+) site is built by Cys-230, His-269, and Glu-273. The short motif at 302 to 306 (KMSKS) is the 'KMSKS' region element. Residue Lys-305 coordinates ATP.

The protein belongs to the class-I aminoacyl-tRNA synthetase family. As to quaternary structure, monomer. Zn(2+) serves as cofactor.

It localises to the cytoplasm. The enzyme catalyses tRNA(Cys) + L-cysteine + ATP = L-cysteinyl-tRNA(Cys) + AMP + diphosphate. This Brucella melitensis biotype 2 (strain ATCC 23457) protein is Cysteine--tRNA ligase.